Reading from the N-terminus, the 657-residue chain is Glycogen debranching enzyme (657 aa).

The active-site Nucleophile is the aspartate 336. The active-site Proton donor is the glutamate 371. Over residues asparagine 458 to aspartate 467 the composition is skewed to basic and acidic residues. The disordered stretch occupies residues asparagine 458–lysine 479.

The protein belongs to the glycosyl hydrolase 13 family.

The catalysed reaction is Hydrolysis of (1-&gt;6)-alpha-D-glucosidic linkages to branches with degrees of polymerization of three or four glucose residues in limit dextrin.. The protein operates within glycan degradation; glycogen degradation. In terms of biological role, removes maltotriose and maltotetraose chains that are attached by 1,6-alpha-linkage to the limit dextrin main chain, generating a debranched limit dextrin. The sequence is that of Glycogen debranching enzyme from Escherichia coli (strain SE11).